A 291-amino-acid polypeptide reads, in one-letter code: ATP synthase gamma chain (291 aa).

It belongs to the ATPase gamma chain family. As to quaternary structure, F-type ATPases have 2 components, CF(1) - the catalytic core - and CF(0) - the membrane proton channel. CF(1) has five subunits: alpha(3), beta(3), gamma(1), delta(1), epsilon(1). CF(0) has three main subunits: a, b and c.

Its subcellular location is the cell inner membrane. In terms of biological role, produces ATP from ADP in the presence of a proton gradient across the membrane. The gamma chain is believed to be important in regulating ATPase activity and the flow of protons through the CF(0) complex. The protein is ATP synthase gamma chain of Neisseria gonorrhoeae (strain NCCP11945).